The sequence spans 63 residues: Chymotrypsin/elastase isoinhibitor 1 (63 aa).

Cystine bridges form between C5–C38, C14–C33, C17–C29, C21–C60, and C40–C54. In terms of domain architecture, TIL spans C5 to C60.

This sequence belongs to the serine protease inhibitor-like (TIL domain-containing) family.

It is found in the secreted. Its function is as follows. Defends the organism against the host's proteinases. In Ascaris suum (Pig roundworm), this protein is Chymotrypsin/elastase isoinhibitor 1.